We begin with the raw amino-acid sequence, 220 residues long: Probable GTP-binding protein EngB (220 aa).

Positions 26–200 (EGIEIAFAGR…RAKLDEWYAP (175 aa)) constitute an EngB-type G domain. GTP-binding positions include 34-41 (GRSNTGKS), 61-65 (GRTQL), 79-82 (DLPG), 146-149 (TKAD), and 179-181 (FSS). Mg(2+) contacts are provided by serine 41 and threonine 63.

Belongs to the TRAFAC class TrmE-Era-EngA-EngB-Septin-like GTPase superfamily. EngB GTPase family. Mg(2+) serves as cofactor.

Its function is as follows. Necessary for normal cell division and for the maintenance of normal septation. This Vibrio cholerae serotype O1 (strain ATCC 39541 / Classical Ogawa 395 / O395) protein is Probable GTP-binding protein EngB.